A 243-amino-acid polypeptide reads, in one-letter code: Protein GrpE (243 aa).

The protein belongs to the GrpE family. In terms of assembly, homodimer.

It is found in the cytoplasm. Participates actively in the response to hyperosmotic and heat shock by preventing the aggregation of stress-denatured proteins, in association with DnaK and GrpE. It is the nucleotide exchange factor for DnaK and may function as a thermosensor. Unfolded proteins bind initially to DnaJ; upon interaction with the DnaJ-bound protein, DnaK hydrolyzes its bound ATP, resulting in the formation of a stable complex. GrpE releases ADP from DnaK; ATP binding to DnaK triggers the release of the substrate protein, thus completing the reaction cycle. Several rounds of ATP-dependent interactions between DnaJ, DnaK and GrpE are required for fully efficient folding. The protein is Protein GrpE of Mycoplasma mobile (strain ATCC 43663 / 163K / NCTC 11711) (Mesomycoplasma mobile).